A 304-amino-acid chain; its full sequence is Aspartate carbamoyltransferase catalytic subunit (304 aa).

2 residues coordinate carbamoyl phosphate: R49 and T50. K77 contributes to the L-aspartate binding site. Carbamoyl phosphate contacts are provided by R99, H127, and Q130. L-aspartate is bound by residues R160 and R211. The carbamoyl phosphate site is built by A252 and P253.

The protein belongs to the aspartate/ornithine carbamoyltransferase superfamily. ATCase family. As to quaternary structure, heterododecamer (2C3:3R2) of six catalytic PyrB chains organized as two trimers (C3), and six regulatory PyrI chains organized as three dimers (R2).

The enzyme catalyses carbamoyl phosphate + L-aspartate = N-carbamoyl-L-aspartate + phosphate + H(+). It participates in pyrimidine metabolism; UMP biosynthesis via de novo pathway; (S)-dihydroorotate from bicarbonate: step 2/3. Functionally, catalyzes the condensation of carbamoyl phosphate and aspartate to form carbamoyl aspartate and inorganic phosphate, the committed step in the de novo pyrimidine nucleotide biosynthesis pathway. This Bacillus mycoides (strain KBAB4) (Bacillus weihenstephanensis) protein is Aspartate carbamoyltransferase catalytic subunit.